We begin with the raw amino-acid sequence, 372 residues long: uncharacterized protein (372 aa).

2 stretches are compositionally biased toward basic residues: residues 1 to 11 (MNKILGLRRAK) and 38 to 48 (RLRRGMQRLSR). A disordered region spans residues 1 to 127 (MNKILGLRRA…NSGTRDTPCW (127 aa)). Residues 50–61 (GYGDNRRSRGSE) are compositionally biased toward basic and acidic residues. Polar residues predominate over residues 93 to 104 (GKTSPCGSSGTP).

This is an uncharacterized protein from Psittacid herpesvirus 1 (isolate Amazon parrot/-/97-0001/1997) (PsHV-1).